Here is a 173-residue protein sequence, read N- to C-terminus: Crossover junction endodeoxyribonuclease RuvC (173 aa).

Catalysis depends on residues Asp8, Glu67, and Asp139. Mg(2+)-binding residues include Asp8, Glu67, and Asp139.

The protein belongs to the RuvC family. As to quaternary structure, homodimer which binds Holliday junction (HJ) DNA. The HJ becomes 2-fold symmetrical on binding to RuvC with unstacked arms; it has a different conformation from HJ DNA in complex with RuvA. In the full resolvosome a probable DNA-RuvA(4)-RuvB(12)-RuvC(2) complex forms which resolves the HJ. Mg(2+) serves as cofactor.

The protein resides in the cytoplasm. It catalyses the reaction Endonucleolytic cleavage at a junction such as a reciprocal single-stranded crossover between two homologous DNA duplexes (Holliday junction).. Functionally, the RuvA-RuvB-RuvC complex processes Holliday junction (HJ) DNA during genetic recombination and DNA repair. Endonuclease that resolves HJ intermediates. Cleaves cruciform DNA by making single-stranded nicks across the HJ at symmetrical positions within the homologous arms, yielding a 5'-phosphate and a 3'-hydroxyl group; requires a central core of homology in the junction. The consensus cleavage sequence is 5'-(A/T)TT(C/G)-3'. Cleavage occurs on the 3'-side of the TT dinucleotide at the point of strand exchange. HJ branch migration catalyzed by RuvA-RuvB allows RuvC to scan DNA until it finds its consensus sequence, where it cleaves and resolves the cruciform DNA. This is Crossover junction endodeoxyribonuclease RuvC from Edwardsiella ictaluri (strain 93-146).